The primary structure comprises 248 residues: Octanoyltransferase (248 aa).

The BPL/LPL catalytic domain maps to 53-238; it reads ADTGDEIWVV…NLDGASAAAD (186 aa). Substrate contacts are provided by residues 93–100, 165–167, and 178–180; these read RGGQITYH, ALG, and GLS. The active-site Acyl-thioester intermediate is the C196.

It belongs to the LipB family.

Its subcellular location is the cytoplasm. The enzyme catalyses octanoyl-[ACP] + L-lysyl-[protein] = N(6)-octanoyl-L-lysyl-[protein] + holo-[ACP] + H(+). The protein operates within protein modification; protein lipoylation via endogenous pathway; protein N(6)-(lipoyl)lysine from octanoyl-[acyl-carrier-protein]: step 1/2. Its function is as follows. Catalyzes the transfer of endogenously produced octanoic acid from octanoyl-acyl-carrier-protein onto the lipoyl domains of lipoate-dependent enzymes. Lipoyl-ACP can also act as a substrate although octanoyl-ACP is likely to be the physiological substrate. This is Octanoyltransferase from Burkholderia orbicola (strain MC0-3).